The sequence spans 243 residues: MHTTALVLFSGGQDSTTCLALALSKYQRVETIAFDYRQRHLVELDARLIVLNEIRARFPQWASKLGEDHLLDLAVLGEVSDTSLTRDTAFKMEQSGLPNTFVPGRNLLFLTLAAAVAYRRDLQVMVTGVCETDFSGYPDCRDDTIKAMQLALSLGMDKRFLIETPLMWIDKAATWALAYELGEKSGTPGGGQALVDLIIEHTHTCYLGDRQHRHAWGYGCGSCPACELRARGYERYCAARTAG.

9–19 serves as a coordination point for ATP; that stretch reads FSGGQDSTTCL. The Zn(2+) site is built by C205, C220, C223, and C226.

This sequence belongs to the QueC family. Zn(2+) is required as a cofactor.

It carries out the reaction 7-carboxy-7-deazaguanine + NH4(+) + ATP = 7-cyano-7-deazaguanine + ADP + phosphate + H2O + H(+). It functions in the pathway purine metabolism; 7-cyano-7-deazaguanine biosynthesis. Functionally, catalyzes the ATP-dependent conversion of 7-carboxy-7-deazaguanine (CDG) to 7-cyano-7-deazaguanine (preQ(0)). In Albidiferax ferrireducens (strain ATCC BAA-621 / DSM 15236 / T118) (Rhodoferax ferrireducens), this protein is 7-cyano-7-deazaguanine synthase.